A 421-amino-acid chain; its full sequence is Histone-lysine N-methyltransferase SUV39H1 (421 aa).

The 59-residue stretch at 46 to 104 folds into the Chromo domain; sequence FEVEYLWNYKKVQDQELYLVKWKYYPDSESTWEPRHHLKCNNLLKQFHLDLERELLRRA. Residues 189-249 enclose the Pre-SET domain; that stretch reads AGCKCRDCFS…SCPNRVVQKG (61 aa). Zn(2+) contacts are provided by cysteine 191, cysteine 193, cysteine 196, cysteine 203, cysteine 204, cysteine 231, cysteine 235, cysteine 237, and cysteine 241. Residues 252–375 form the SET domain; the sequence is YKFCIFRTSD…TGEELTFDYN (124 aa). Residues 263 to 265, tyrosine 306, and 332 to 333 each bind S-adenosyl-L-methionine; these read RGW and NH. The Zn(2+) site is built by cysteine 335, cysteine 409, cysteine 411, and cysteine 416. The Post-SET domain maps to 405–421; sequence VRVECKCGVSSCRKYLF.

It belongs to the class V-like SAM-binding methyltransferase superfamily. Histone-lysine methyltransferase family. Suvar3-9 subfamily.

It localises to the nucleus. Its subcellular location is the chromosome. The protein localises to the centromere. It carries out the reaction L-lysyl(9)-[histone H3] + 3 S-adenosyl-L-methionine = N(6),N(6),N(6)-trimethyl-L-lysyl(9)-[histone H3] + 3 S-adenosyl-L-homocysteine + 3 H(+). Histone methyltransferase that specifically trimethylates 'Lys-9' of histone H3 using monomethylated H3 'Lys-9' as substrate. H3 'Lys-9' trimethylation represents a specific tag for epigenetic transcriptional repression by recruiting HP1 (CBX1, CBX3 and/or CBX5) proteins to methylated histones. Mainly functions in heterochromatin regions, thereby playing a central role in the establishment of constitutive heterochromatin at pericentric and telomere regions. H3 'Lys-9' trimethylation is also required to direct DNA methylation at pericentric repeats. SUV39H1 is targeted to histone H3 via its interaction with RB1 and is involved in many processes. This is Histone-lysine N-methyltransferase SUV39H1 (suv39h1) from Xenopus laevis (African clawed frog).